Reading from the N-terminus, the 146-residue chain is Putative pre-16S rRNA nuclease (146 aa).

This sequence belongs to the YqgF nuclease family.

The protein resides in the cytoplasm. Its function is as follows. Could be a nuclease involved in processing of the 5'-end of pre-16S rRNA. This chain is Putative pre-16S rRNA nuclease, found in Pseudomonas savastanoi pv. phaseolicola (strain 1448A / Race 6) (Pseudomonas syringae pv. phaseolicola (strain 1448A / Race 6)).